We begin with the raw amino-acid sequence, 194 residues long: Chromophore lyase CpcT/CpeT 1 (194 aa).

It belongs to the CpcT/CpeT biliprotein lyase family.

Its function is as follows. Covalently attaches a chromophore to Cys residue(s) of phycobiliproteins. In Microcystis aeruginosa (strain NIES-843 / IAM M-2473), this protein is Chromophore lyase CpcT/CpeT 1.